Reading from the N-terminus, the 789-residue chain is Disintegrin and metalloproteinase domain-containing protein 7 (789 aa).

The signal sequence occupies residues 1-23; the sequence is MLTTGIFWMTVLISHIQERGIVG. Residues 24 to 176 constitute a propeptide that is removed on maturation; sequence VEGQELVHPK…NHSCVGLNFT (153 aa). Over 24–667 the chain is Extracellular; sequence VEGQELVHPK…EWGEALNLTS (644 aa). Residues Asn-84, Asn-167, and Asn-174 are each glycosylated (N-linked (GlcNAc...) asparagine). The Peptidase M12B domain maps to 199-393; it reads KFIELFVVAD…QKPACILNNP (195 aa). Intrachain disulfides connect Cys-310–Cys-388, Cys-350–Cys-372, Cys-352–Cys-357, and Cys-459–Cys-479. A Disintegrin domain is found at 401 to 487; the sequence is YPFCGNKKVD…ECPKDEFQAN (87 aa). 3 N-linked (GlcNAc...) asparagine glycosylation sites follow: Asn-583, Asn-628, and Asn-664. Residues 668–689 traverse the membrane as a helical segment; that stretch reads VSIMVIVLVMVIIGVGLVILLI. The Cytoplasmic portion of the chain corresponds to 690–789; it reads RYQKCIKMKQ…DTQSGCERLG (100 aa). Residues 764-789 are disordered; sequence RGIADPKQTDNVNLNLDTQSGCERLG. Over residues 772–789 the composition is skewed to polar residues; sequence TDNVNLNLDTQSGCERLG.

In terms of assembly, interacts with ITM2B in sperm; the interaction increases following capacitation. Interacts with HSPA5 and CANX. As to expression, expressed in both the head and tails of sperm (at protein level). Expressed in the epididymis (at protein level). Abundantly expressed in the apical region of the proximal caput epididymal epithelium, with decreasing expression in the mid and distal caput epididymal epithelium.

Its subcellular location is the membrane. Required for normal male fertility via maintenance of epithelial cell morphology in the caput epididymis and subsequently correct epididymis lumen structure required for sperm development. Plays a role in sperm motility, flagella morphology and tyrosine phosphorylation during sperm capacitance. Plays a role in normal expression levels of HSPA5, ITM2B and ADAM2 in sperm both prior to and post-capacitation. This is a non catalytic metalloprotease-like protein. In Mus musculus (Mouse), this protein is Disintegrin and metalloproteinase domain-containing protein 7.